Consider the following 518-residue polypeptide: Nuclear receptor ROR-gamma (518 aa).

The segment at 1 to 30 (MDRAPQRQHQASRELLAAKKTHTSQIEVIP) is modulating. 2 NR C4-type zinc fingers span residues 31 to 51 (CKIC…CEGC) and 67 to 91 (CTRQ…LQKC). A DNA-binding region (nuclear receptor) is located at residues 31–96 (CKICGDKSSG…RLQKCLALGM (66 aa)). Disordered regions lie at residues 105 to 183 (RMSK…SGSG) and 238 to 258 (HPGL…SFRS). The span at 109-118 (KQRDSLHAEV) shows a compositional bias: basic and acidic residues. Low complexity predominate over residues 119 to 130 (QKQLQQRQQQQQ). One can recognise an NR LBD domain in the interval 269–508 (EIEHLVQSVC…PPLYKELFST (240 aa)). The AF-2 signature appears at 501–506 (LYKELF).

This sequence belongs to the nuclear hormone receptor family. NR1 subfamily. Interacts (via AF-2 motif) with the coactivators NCOA1, NCOA2 and PPARGC1A (via LXXLL motif). Interacts with the corepressor NCOR1. Interacts with CRY1. Interacts (via AF-2 motif) with PROX1. Interacts with FOXP3. Interacts with NR0B2.

The protein resides in the nucleus. In terms of biological role, nuclear receptor that binds DNA as a monomer to ROR response elements (RORE) containing a single core motif half-site 5'-AGGTCA-3' preceded by a short A-T-rich sequence. Key regulator of cellular differentiation, immunity, peripheral circadian rhythm as well as lipid, steroid, xenobiotics and glucose metabolism. Considered to have intrinsic transcriptional activity, have some natural ligands like oxysterols that act as agonists (25-hydroxycholesterol) or inverse agonists (7-oxygenated sterols), enhancing or repressing the transcriptional activity, respectively. Recruits distinct combinations of cofactors to target gene regulatory regions to modulate their transcriptional expression, depending on the tissue, time and promoter contexts. Regulates the circadian expression of clock genes such as CRY1, BMAL1 and NR1D1 in peripheral tissues and in a tissue-selective manner. Competes with NR1D1 for binding to their shared DNA response element on some clock genes such as BMAL1, CRY1 and NR1D1 itself, resulting in NR1D1-mediated repression or RORC-mediated activation of the expression, leading to the circadian pattern of clock genes expression. Therefore influences the period length and stability of the clock. Involved in the regulation of the rhythmic expression of genes involved in glucose and lipid metabolism, including PLIN2 and AVPR1A. Negative regulator of adipocyte differentiation through the regulation of early phase genes expression, such as MMP3. Controls adipogenesis as well as adipocyte size and modulates insulin sensitivity in obesity. In liver, has specific and redundant functions with RORA as positive or negative modulator of expression of genes encoding phase I and Phase II proteins involved in the metabolism of lipids, steroids and xenobiotics, such as SULT1E1. Also plays a role in the regulation of hepatocyte glucose metabolism through the regulation of G6PC1 and PCK1. Essential for thymopoiesis and the development of several secondary lymphoid tissues, including lymph nodes and Peyer's patches. Required for the generation of LTi (lymphoid tissue inducer) cells. Regulates thymocyte survival through DNA-binding on ROREs of target gene promoter regions and recruitment of coactivaros via the AF-2. Also plays a key role, downstream of IL6 and TGFB and synergistically with RORA, for lineage specification of uncommitted CD4(+) T-helper (T(H)) cells into T(H)17 cells, antagonizing the T(H)1 program. Probably regulates IL17 and IL17F expression on T(H) by binding to the essential enhancer conserved non-coding sequence 2 (CNS2) in the IL17-IL17F locus. May also play a role in the pre-TCR activation cascade leading to the maturation of alpha/beta T-cells and may participate in the regulation of DNA accessibility in the TCR-J(alpha) locus. Regulates the rhythmic expression of PROX1 and promotes its nuclear localization. Plays an indispensable role in the induction of IFN-gamma dependent anti-mycobacterial systemic immunity. The polypeptide is Nuclear receptor ROR-gamma (RORC) (Pongo abelii (Sumatran orangutan)).